The primary structure comprises 323 residues: Elongation factor P--(R)-beta-lysine ligase (323 aa).

76-78 (SPE) is a binding site for substrate. ATP is bound by residues 100-102 (RNE) and Asn-109. Tyr-118 contacts substrate. 242-243 (EL) contributes to the ATP binding site. Residue Glu-249 coordinates substrate. Gly-298 is an ATP binding site.

Belongs to the class-II aminoacyl-tRNA synthetase family. EpmA subfamily. Homodimer.

It catalyses the reaction D-beta-lysine + L-lysyl-[protein] + ATP = N(6)-((3R)-3,6-diaminohexanoyl)-L-lysyl-[protein] + AMP + diphosphate + H(+). Its function is as follows. With EpmB is involved in the beta-lysylation step of the post-translational modification of translation elongation factor P (EF-P). Catalyzes the ATP-dependent activation of (R)-beta-lysine produced by EpmB, forming a lysyl-adenylate, from which the beta-lysyl moiety is then transferred to the epsilon-amino group of a conserved specific lysine residue in EF-P. In Haemophilus influenzae (strain ATCC 51907 / DSM 11121 / KW20 / Rd), this protein is Elongation factor P--(R)-beta-lysine ligase.